Reading from the N-terminus, the 110-residue chain is Ribonuclease P protein component 1 (110 aa).

This sequence belongs to the eukaryotic/archaeal RNase P protein component 1 family. Consists of a catalytic RNA component and at least 4-5 protein subunits.

It is found in the cytoplasm. The catalysed reaction is Endonucleolytic cleavage of RNA, removing 5'-extranucleotides from tRNA precursor.. In terms of biological role, part of ribonuclease P, a protein complex that generates mature tRNA molecules by cleaving their 5'-ends. The sequence is that of Ribonuclease P protein component 1 from Methanosarcina mazei (strain ATCC BAA-159 / DSM 3647 / Goe1 / Go1 / JCM 11833 / OCM 88) (Methanosarcina frisia).